The chain runs to 509 residues: Cytochrome P450 monooxygenase traB (509 aa).

The chain crosses the membrane as a helical span at residues 8–28 (LVELVSITGGLIVLFIAYTGF). Residue Cys453 participates in heme binding.

Belongs to the cytochrome P450 family. It depends on heme as a cofactor.

Its subcellular location is the membrane. Its pathway is secondary metabolite biosynthesis. Its function is as follows. Cytochrome P450 monooxygenase; part of the tra gene cluster that produces terrestric acid. The clavatol biosynthesis cluster cla and the terrestric acid cluster tra are both involved in the production of peniphenones and penilactones. The non-reducing PKS claF is responsible for the formation of clavatol from successive condensations of 3 malonyl-CoA units, presumably with a simple acetyl-CoA starter unit, and 2 methylation steps. The esterase claE probably collaborates with claF by catalyzing the hydrolysis of ACP-bound acyl intermediates to free the ACP from stalled intermediates. The clavatol oxidase claD then converts clavatol to hydroxyclavatol. Spontaneous dehydration of hydroxyclavatol leads to the accumulation of the highly active ortho-quinone methide. On the other hand, the PKS-NRPS hybrid traA is involved in the formation of crustosic acid, with the help of traB and traD. The polyketide synthase module (PKS) of traA is responsible for the synthesis of the polyketide backbone via the condensation of an acetyl-CoA starter unit with 3 malonyl-CoA units. The downstream nonribosomal peptide synthetase (NRPS) module then amidates the carboxyl end of the polyketide with L-malic acid. Because traA lacks a designated enoylreductase (ER) domain, the required activity is provided the enoyl reductase traG. Crustosic acid undergoes decarboxylation and isomerization to the terrestric acid, catalyzed by the 2-oxoglutarate-dependent dioxygenase traH. Both acids are further converted to the 2 gamma-butyrolactones (R)-5-methyltetronic acid and (S)-5-carboxylmethyltetronic acid, with involvement of the cytochrome P450 monooxygenase claJ. Spontaneous addition of the methide to these gamma-butyrolactones leads to peniphenone D and penilactone D, which undergo again stereospecific attacking by methide to give penilactones A and B. The chain is Cytochrome P450 monooxygenase traB from Penicillium crustosum (Blue mold fungus).